A 438-amino-acid chain; its full sequence is MALFGSSGIRGVIGSGMTPELALKAGKALGLLHKKIVIGHDPRTSSHMIEDAMVAGMLCSGARVTRIGLVSTPTLAYAARNYDCGIMITASHNPPEYNGIKFWNPDGMAFSLKQQDELERLIESDIRGVGWEYIGSESHASNAILDHIDVILRNVEKCSLKVVVDCGCGAATTITPYVLREMGCKVISLNAQPDGFFPARDPEPIDENLSELKEAVKAFDADLGIAHDGDADRMMAVDDQGRLVTGDELLAYFCRFEVKDSVVCPVDASMVVDRCKPGVKVYRTRIGDAFVSEEVRKVNADFGGETSGTWIFPRISYCPDGIYAAAKLVELVSKNGRLSKAIADLPRYPLKRGGMKFSHGNKADIMGGIRAEIEQANSRINTLDGVRVEYPEGWVLIRPSGTEPKIRITAEAVDEGAAEKLYSQAESIVKRCIDSCAQ.

S91 functions as the Phosphoserine intermediate in the catalytic mechanism. Positions 91, 228, 230, and 232 each coordinate Mg(2+). Phosphoserine is present on S91.

It belongs to the phosphohexose mutase family. Requires Mg(2+) as cofactor. Post-translationally, activated by phosphorylation.

It catalyses the reaction alpha-D-glucosamine 1-phosphate = D-glucosamine 6-phosphate. Catalyzes the conversion of glucosamine-6-phosphate to glucosamine-1-phosphate. This Methanocella arvoryzae (strain DSM 22066 / NBRC 105507 / MRE50) protein is Probable phosphoglucosamine mutase.